The sequence spans 410 residues: tRNA-guanine(15) transglycosylase (410 aa).

The Nucleophile role is filled by Asp87. Asp122 and Gly187 together coordinate substrate.

It belongs to the archaeosine tRNA-ribosyltransferase family. It depends on Zn(2+) as a cofactor.

The catalysed reaction is guanosine(15) in tRNA + 7-cyano-7-deazaguanine = 7-cyano-7-carbaguanosine(15) in tRNA + guanine. It functions in the pathway tRNA modification; archaeosine-tRNA biosynthesis. Its function is as follows. Exchanges the guanine residue with 7-cyano-7-deazaguanine (preQ0) at position 15 in the dihydrouridine loop (D-loop) of archaeal tRNAs. The chain is tRNA-guanine(15) transglycosylase from Nanoarchaeum equitans (strain Kin4-M).